The following is a 381-amino-acid chain: MAIFIRKMHPLLKIMNHALVDLPAPSNISLWWNFGSLLGLCLIIQILTGLFLAMHYTADVSMAFSSVVHICRDVNYGWLIRNIHANGASLFFICVYLHIARGLYYGSYLYKETWNIGVILLFLLMATAFVGYVLPWGQMSFWGATVITNLLSAFPYIGNMLVQWIWGGFSVDNATLTRFFAFHFLLPFLILALTVIHLLFLHETGSNNPLGINSDADKISFHPYFSYKDLLGFFVMIFFLTTLALFMPNLLGDAENFIPANPLVTPPHIKPEWYFLFAYAILRSIPNKLGGVLALLFSIFILMLVPLLHTSKQRSNIFRPLTQIFFWLLVANSIILTWIGGQPVEQPFITVGQIASISYFSLFLIIMPFASWCENKILSLN.

4 consecutive transmembrane segments (helical) span residues 34-54 (FGSLLGLCLIIQILTGLFLAM), 78-99 (WLIRNIHANGASLFFICVYLHI), 114-134 (WNIGVILLFLLMATAFVGYVL), and 179-199 (FFAFHFLLPFLILALTVIHLL). 2 residues coordinate heme b: His-84 and His-98. Residues His-183 and His-197 each contribute to the heme b site. His-202 contacts a ubiquinone. Helical transmembrane passes span 227 to 247 (YKDLLGFFVMIFFLTTLALFM), 289 to 309 (LGGVLALLFSIFILMLVPLLH), 321 to 341 (LTQIFFWLLVANSIILTWIGG), and 348 to 368 (FITVGQIASISYFSLFLIIMP).

This sequence belongs to the cytochrome b family. In terms of assembly, the cytochrome bc1 complex contains 3 respiratory subunits (MT-CYB, CYC1 and UQCRFS1), 2 core proteins (UQCRC1 and UQCRC2) and probably 6 low-molecular weight proteins. Requires heme b as cofactor.

The protein resides in the mitochondrion inner membrane. Functionally, component of the ubiquinol-cytochrome c reductase complex (complex III or cytochrome b-c1 complex) that is part of the mitochondrial respiratory chain. The b-c1 complex mediates electron transfer from ubiquinol to cytochrome c. Contributes to the generation of a proton gradient across the mitochondrial membrane that is then used for ATP synthesis. This chain is Cytochrome b (mt-cyb), found in Sphyrna lewini (Scalloped hammerhead shark).